The primary structure comprises 286 residues: Hydroxysteroid 11-beta-dehydrogenase 1-like protein (286 aa).

Residues 1–17 (MGIHIKRWCFIILVASA) form the signal peptide. Residues 39–65 (GASTGIGEEIAYHYARAGAKLVLTARR), 90–91 (DM), and 117–119 (NHI) each bind NADP(+). Ser-168 contacts substrate. The active-site Proton acceptor is Tyr-181. NADP(+)-binding positions include 181–185 (YAASK) and 214–220 (GLIDTQS).

The protein belongs to the short-chain dehydrogenases/reductases (SDR) family.

The protein localises to the secreted. It catalyses the reaction cortisone + NADPH + H(+) = cortisol + NADP(+). In terms of biological role, unidirectional NADP(+)-dependent cortisol dehydrogenase (in vitro). This is Hydroxysteroid 11-beta-dehydrogenase 1-like protein (hsd11b1l) from Xenopus tropicalis (Western clawed frog).